The following is a 126-amino-acid chain: MIRTMLQGKLHRVKVTQADLHYEGSCAIDQDFLDASGILENEAIDIWNVTNGKRFSTYAIAAERGSRIISVNGAAAHCAEVGDIVIIASFVTMSDEEARTWRPKVAYFEGDNEMKRTAKAIPVQVA.

Ser-25 acts as the Schiff-base intermediate with substrate; via pyruvic acid in catalysis. Pyruvic acid (Ser) is present on Ser-25. Residue Thr-57 coordinates substrate. Tyr-58 functions as the Proton donor in the catalytic mechanism. 73–75 (GAA) serves as a coordination point for substrate.

This sequence belongs to the PanD family. Heterooctamer of four alpha and four beta subunits. Pyruvate serves as cofactor. Is synthesized initially as an inactive proenzyme, which is activated by self-cleavage at a specific serine bond to produce a beta-subunit with a hydroxyl group at its C-terminus and an alpha-subunit with a pyruvoyl group at its N-terminus.

Its subcellular location is the cytoplasm. It carries out the reaction L-aspartate + H(+) = beta-alanine + CO2. The protein operates within cofactor biosynthesis; (R)-pantothenate biosynthesis; beta-alanine from L-aspartate: step 1/1. Functionally, catalyzes the pyruvoyl-dependent decarboxylation of aspartate to produce beta-alanine. In Salmonella choleraesuis (strain SC-B67), this protein is Aspartate 1-decarboxylase.